Here is a 623-residue protein sequence, read N- to C-terminus: Sphingomyelinase C 2 (623 aa).

The signal sequence occupies residues 1-25 (MINKITKPKLLIGYYLLLFSLIRCL). Composition is skewed to low complexity over residues 51–61 (VNSVSINNDPA) and 67–80 (NPASANNNQVNAVP). The disordered stretch occupies residues 51–121 (VNSVSINNDP…DPNPANLASA (71 aa)). Positions 89 to 102 (NPVNPASANSNQVN) are enriched in polar residues. Over residues 110–121 (PADPNPANLASA) the composition is skewed to low complexity.

The protein resides in the secreted. The catalysed reaction is a sphingomyelin + H2O = phosphocholine + an N-acylsphing-4-enine + H(+). In Leptospira interrogans serogroup Icterohaemorrhagiae serovar Lai (strain 56601), this protein is Sphingomyelinase C 2 (sph2).